The chain runs to 264 residues: Short-chain dehydrogenase/reductase malC (264 aa).

A helical transmembrane segment spans residues 13-35 (GKNVLIIGGTSGIGFAVAQLVIE). NADP(+) is bound by residues Thr-22, Ser-23, Ile-25, Ser-45, Asn-46, Lys-49, Asp-75, Asn-88, Arg-130, Val-202, and Thr-204. N-linked (GlcNAc...) asparagine glycosylation is present at Asn-249.

The protein belongs to the short-chain dehydrogenases/reductases (SDR) family.

The protein resides in the membrane. It catalyses the reaction 1-hydroxy-3-{[2-(1,1-dimethylallyl)-indol-3-yl]methyl}-6H,7H,8H-5lambda(5)-pyrrolo[1,2-a]pyrazine + NADPH + H(+) = 1-hydroxy-3-{[2-(1,1-dimethylallyl)-indol-3-yl]methyl}-4H,6H,7H,8H-pyrrolo[1,2-a]pyrazine + NADP(+). The enzyme catalyses 1-hydroxy-3-{[2-(1,1-dimethylallyl)-indol-3-yl]methyl}-4H,6H,7H,8H-pyrrolo[1,2-a]pyrazine = (+)-premalbrancheamide. It participates in alkaloid biosynthesis. Its function is as follows. Short-chain dehydrogenase/reductase; part of the gene cluster that mediates the biosynthesis of malbrancheamide, a dichlorinated fungal indole alkaloid that belongs to a family of natural products containing a characteristic bicyclo[2.2.2]diazaoctane core. The first step of malbrancheamide biosynthesis involves coupling of L-proline and L-tryptophan by malG, a bimodular NRPS, to produce L-Pro-L-Trp aldehyde through reductive offloading. This compound undergoes spontaneous cyclization and dehydration to give a dienamine which is reverse prenylated at C-2 by malE. The other prenyltransferase present in the cluster, malB, displays modest activity, suggesting that may be a redundant gene in the pathway. Subsequently, a [4+2] Diels-Alder cyclo-addition catalyzed by the bifunctional enzyme malC forms the characteristic bicyclo[2.2.2]diazaoctane ring of premalbrancheamid. The first reaction catalyzed is a NADPH-dependent reduction reaction in which the nicotinamide cofactor is a stoichiometric reagent. Either NADH or NADPH is effective as a cofactor. NADP(+) is required for stereocontrolled formation of premalbrancheamide, however it does not appear to be required as a formal stoichiometric reagent because the second reaction performed by malC, the [4+2] cycloaddition, is a balanced chemical reaction without requirement for hydride transfer to balance the reaction. Finally, the flavin-dependent halogenase malA catalyzes the iterative dichlorination of the indole ring of premalbrancheamide to yield C-9 monochlorinated malbrancheamide B, C-8 monochlorinated isomalbrancheamide B, and dichlorinated malbrancheamide. MalA is also able to brominate premalbrancheamide at C-9 to yield malbrancheamide C, and, to a lesser extend, at C-8 to yield isomalbrancheamide C. Finally, malA can brominate C-9 monochlorinated malbrancheamide B at C-8 to yield malbrancheamide D, or C-8 monochlorinated isomalbrancheamide B at C-9 to produce isomalbrancheamide D. In Malbranchea aurantiaca, this protein is Short-chain dehydrogenase/reductase malC.